Consider the following 282-residue polypeptide: Hydroxyethylthiazole kinase 2 (282 aa).

Residue Met-44 participates in substrate binding. Residues Arg-120 and Ser-179 each contribute to the ATP site. Gly-206 contacts substrate.

It belongs to the Thz kinase family. Requires Mg(2+) as cofactor.

It carries out the reaction 5-(2-hydroxyethyl)-4-methylthiazole + ATP = 4-methyl-5-(2-phosphooxyethyl)-thiazole + ADP + H(+). Its pathway is cofactor biosynthesis; thiamine diphosphate biosynthesis; 4-methyl-5-(2-phosphoethyl)-thiazole from 5-(2-hydroxyethyl)-4-methylthiazole: step 1/1. Catalyzes the phosphorylation of the hydroxyl group of 4-methyl-5-beta-hydroxyethylthiazole (THZ). This is Hydroxyethylthiazole kinase 2 from Methanosphaera stadtmanae (strain ATCC 43021 / DSM 3091 / JCM 11832 / MCB-3).